A 1464-amino-acid chain; its full sequence is DNA polymerase III PolC-type (1464 aa).

The 157-residue stretch at 426-582 (YVVFDVETTG…YDAEATGRLL (157 aa)) folds into the Exonuclease domain.

This sequence belongs to the DNA polymerase type-C family. PolC subfamily.

The protein resides in the cytoplasm. It catalyses the reaction DNA(n) + a 2'-deoxyribonucleoside 5'-triphosphate = DNA(n+1) + diphosphate. Required for replicative DNA synthesis. This DNA polymerase also exhibits 3' to 5' exonuclease activity. This is DNA polymerase III PolC-type from Streptococcus thermophilus (strain CNRZ 1066).